Consider the following 209-residue polypeptide: Large ribosomal subunit protein bL21m (209 aa).

Residues 1-43 (MAAAIAASALPGAFGRLVSVCSRSILASQGSGSASLWSASRRF) constitute a mitochondrion transit peptide.

It belongs to the bacterial ribosomal protein bL21 family. As to quaternary structure, component of the mitochondrial ribosome large subunit (39S) which comprises a 16S rRNA and about 50 distinct proteins.

Its subcellular location is the mitochondrion. The chain is Large ribosomal subunit protein bL21m (Mrpl21) from Mus musculus (Mouse).